The following is a 456-amino-acid chain: NAD-dependent deacetylase sir2C (456 aa).

The Deacetylase sirtuin-type domain maps to I161–D443. H294 serves as the catalytic Proton acceptor. Zn(2+) contacts are provided by C302, C305, C331, and C336.

The protein belongs to the sirtuin family. Zn(2+) serves as cofactor.

The enzyme catalyses N(6)-acetyl-L-lysyl-[protein] + NAD(+) + H2O = 2''-O-acetyl-ADP-D-ribose + nicotinamide + L-lysyl-[protein]. Its function is as follows. NAD-dependent deacetylase, which plays an important role in the regulation of transcriptional repression. In Dictyostelium discoideum (Social amoeba), this protein is NAD-dependent deacetylase sir2C (sir2C).